A 228-amino-acid chain; its full sequence is U1 small nuclear ribonucleoprotein C-2 (228 aa).

A Matrin-type zinc finger spans residues Tyr4–Thr36. The interval Pro105–His228 is disordered. 2 stretches are compositionally biased toward pro residues: residues Val107–Ser156 and Leu164–Ser175. Over residues Pro178 to Ala190 the composition is skewed to low complexity. Residues Pro196–Pro214 show a composition bias toward pro residues.

Belongs to the U1 small nuclear ribonucleoprotein C family. In terms of assembly, U1 snRNP is composed of the 7 core Sm proteins B/B', D1, D2, D3, E, F and G that assemble in a heptameric protein ring on the Sm site of the small nuclear RNA to form the core snRNP, and at least 3 U1 snRNP-specific proteins U1-70K, U1-A and U1-C. U1-C interacts with U1 snRNA and the 5' splice-site region of the pre-mRNA.

The protein resides in the nucleus. Its function is as follows. Component of the spliceosomal U1 snRNP, which is essential for recognition of the pre-mRNA 5' splice-site and the subsequent assembly of the spliceosome. U1-C is directly involved in initial 5' splice-site recognition for both constitutive and regulated alternative splicing. The interaction with the 5' splice-site seems to precede base-pairing between the pre-mRNA and the U1 snRNA. Stimulates commitment or early (E) complex formation by stabilizing the base pairing of the 5' end of the U1 snRNA and the 5' splice-site region. The protein is U1 small nuclear ribonucleoprotein C-2 of Sorghum bicolor (Sorghum).